Here is an 86-residue protein sequence, read N- to C-terminus: Small ribosomal subunit protein bS16 (86 aa).

It belongs to the bacterial ribosomal protein bS16 family.

This is Small ribosomal subunit protein bS16 from Legionella pneumophila (strain Paris).